The chain runs to 333 residues: Ornithine carbamoyltransferase (333 aa).

Residues 56-59 (STRT), Arg-107, and 134-137 (HPTQ) each bind carbamoyl phosphate. Residues Asn-167, Asp-231, and 235 to 236 (SM) contribute to the L-ornithine site. Residues 273 to 274 (CL) and Arg-318 contribute to the carbamoyl phosphate site.

Belongs to the aspartate/ornithine carbamoyltransferase superfamily. OTCase family.

Its subcellular location is the cytoplasm. The enzyme catalyses carbamoyl phosphate + L-ornithine = L-citrulline + phosphate + H(+). It participates in amino-acid degradation; L-arginine degradation via ADI pathway; carbamoyl phosphate from L-arginine: step 2/2. Functionally, reversibly catalyzes the transfer of the carbamoyl group from carbamoyl phosphate (CP) to the N(epsilon) atom of ornithine (ORN) to produce L-citrulline. In Clostridium botulinum (strain Langeland / NCTC 10281 / Type F), this protein is Ornithine carbamoyltransferase.